A 601-amino-acid chain; its full sequence is Elongation factor 4 (601 aa).

In terms of domain architecture, tr-type G spans 6-188; it reads QCIRNFSIIA…AVVAKVPPPQ (183 aa). Residues 18-23 and 135-138 contribute to the GTP site; these read DHGKST and NKID.

It belongs to the TRAFAC class translation factor GTPase superfamily. Classic translation factor GTPase family. LepA subfamily.

Its subcellular location is the cell membrane. The catalysed reaction is GTP + H2O = GDP + phosphate + H(+). Its function is as follows. Required for accurate and efficient protein synthesis under certain stress conditions. May act as a fidelity factor of the translation reaction, by catalyzing a one-codon backward translocation of tRNAs on improperly translocated ribosomes. Back-translocation proceeds from a post-translocation (POST) complex to a pre-translocation (PRE) complex, thus giving elongation factor G a second chance to translocate the tRNAs correctly. Binds to ribosomes in a GTP-dependent manner. This is Elongation factor 4 from Desulfitobacterium hafniense (strain DSM 10664 / DCB-2).